The sequence spans 435 residues: Gamma-glutamyl phosphate reductase (435 aa).

This sequence belongs to the gamma-glutamyl phosphate reductase family.

The protein resides in the cytoplasm. It catalyses the reaction L-glutamate 5-semialdehyde + phosphate + NADP(+) = L-glutamyl 5-phosphate + NADPH + H(+). It participates in amino-acid biosynthesis; L-proline biosynthesis; L-glutamate 5-semialdehyde from L-glutamate: step 2/2. Catalyzes the NADPH-dependent reduction of L-glutamate 5-phosphate into L-glutamate 5-semialdehyde and phosphate. The product spontaneously undergoes cyclization to form 1-pyrroline-5-carboxylate. This Aquifex aeolicus (strain VF5) protein is Gamma-glutamyl phosphate reductase.